Here is a 431-residue protein sequence, read N- to C-terminus: Aspartate--tRNA(Asp/Asn) ligase (431 aa).

Residue E170 participates in L-aspartate binding. Positions 192 to 195 are aspartate; that stretch reads QLYK. R214 contacts L-aspartate. Residues 214–216, 222–224, and E354 each bind ATP; these read RAE and RHL. E354 and S357 together coordinate Mg(2+). S357 and R361 together coordinate L-aspartate. An ATP-binding site is contributed by 402 to 405; the sequence is GLER.

Belongs to the class-II aminoacyl-tRNA synthetase family. Type 2 subfamily. In terms of assembly, homodimer. The cofactor is Mg(2+).

It is found in the cytoplasm. The catalysed reaction is tRNA(Asx) + L-aspartate + ATP = L-aspartyl-tRNA(Asx) + AMP + diphosphate. Aspartyl-tRNA synthetase with relaxed tRNA specificity since it is able to aspartylate not only its cognate tRNA(Asp) but also tRNA(Asn). Reaction proceeds in two steps: L-aspartate is first activated by ATP to form Asp-AMP and then transferred to the acceptor end of tRNA(Asp/Asn). This is Aspartate--tRNA(Asp/Asn) ligase from Methanopyrus kandleri (strain AV19 / DSM 6324 / JCM 9639 / NBRC 100938).